Here is a 244-residue protein sequence, read N- to C-terminus: 6-carboxyhexanoate--CoA ligase (244 aa).

It belongs to the BioW family. In terms of assembly, homodimer. It depends on Mg(2+) as a cofactor.

It catalyses the reaction heptanedioate + ATP + CoA = 6-carboxyhexanoyl-CoA + AMP + diphosphate. It functions in the pathway metabolic intermediate metabolism; pimeloyl-CoA biosynthesis; pimeloyl-CoA from pimelate: step 1/1. Functionally, catalyzes the transformation of pimelate into pimeloyl-CoA with concomitant hydrolysis of ATP to AMP. The protein is 6-carboxyhexanoate--CoA ligase of Methanococcus maripaludis (strain C6 / ATCC BAA-1332).